The sequence spans 354 residues: Guanine nucleotide-binding protein G(i) subunit alpha (354 aa).

G2 carries N-myristoyl glycine lipidation. A lipid anchor (S-palmitoyl cysteine) is attached at C3. The region spanning 32-354 (REVKLLLLGA…KNNLKDCGLF (323 aa)) is the G-alpha domain. Residues 35–48 (KLLLLGAGESGKST) are G1 motif. GTP-binding positions include 40–47 (GAGESGKS), 175–181 (LRTRVKT), 200–204 (DVGGQ), 269–272 (NKKD), and A326. Mg(2+)-binding residues include S47 and T181. The G2 motif stretch occupies residues 173-181 (DVLRTRVKT). Residues 196-205 (FKMFDVGGQR) form a G3 motif region. A G4 motif region spans residues 265 to 272 (ILFLNKKD). The interval 324–329 (TCATDT) is G5 motif.

It belongs to the G-alpha family. G(i/o/t/z) subfamily. As to quaternary structure, g proteins are composed of 3 units; alpha, beta and gamma. The alpha chain contains the guanine nucleotide binding site.

In terms of biological role, guanine nucleotide-binding proteins (G proteins) are involved as modulators or transducers in various transmembrane signaling systems. The polypeptide is Guanine nucleotide-binding protein G(i) subunit alpha (Planorbella trivolvis (Marsh rams-horn)).